A 390-amino-acid chain; its full sequence is Altered inheritance of mitochondria protein 6 (390 aa).

An N-terminal signal peptide occupies residues 1 to 26 (MLGLKGCLTILIGYVIAVCALFSSRG).

This sequence belongs to the AIM6 family.

The chain is Altered inheritance of mitochondria protein 6 (AIM6) from Saccharomyces cerevisiae (strain RM11-1a) (Baker's yeast).